We begin with the raw amino-acid sequence, 341 residues long: Ribosomal RNA small subunit methyltransferase H (341 aa).

Residues 47-49 (GGY), Asp64, Phe91, Asp109, and Gln116 each bind S-adenosyl-L-methionine.

Belongs to the methyltransferase superfamily. RsmH family.

The protein localises to the cytoplasm. The catalysed reaction is cytidine(1402) in 16S rRNA + S-adenosyl-L-methionine = N(4)-methylcytidine(1402) in 16S rRNA + S-adenosyl-L-homocysteine + H(+). Specifically methylates the N4 position of cytidine in position 1402 (C1402) of 16S rRNA. The sequence is that of Ribosomal RNA small subunit methyltransferase H from Rhizobium johnstonii (strain DSM 114642 / LMG 32736 / 3841) (Rhizobium leguminosarum bv. viciae).